A 495-amino-acid chain; its full sequence is BUB3-interacting and GLEBS motif-containing protein ZNF207 (495 aa).

Residues 1 to 92 form a microtubule-binding region region; sequence MGRKKKKQLK…EGIPEKDMDE (92 aa). C2H2-type zinc fingers lie at residues 11 to 34 and 35 to 58; these read PWCWYCNRDFDDEKILIQHQKAKH and FKCHICHKKLYTGPGLAIHCMQVH. Positions 99–111 are enriched in basic and acidic residues; that stretch reads QKTQESQKKKQQD. Disordered regions lie at residues 99–161, 252–292, and 316–372; these read QKTQ…PGIP, PPAP…SNSE, and VGTD…ATLT. Over residues 112–121 the composition is skewed to acidic residues; that stretch reads DSDEYDDDES. Over residues 127–136 the composition is skewed to polar residues; that stretch reads FQPQPVQPQQ. The span at 142 to 161 shows a compositional bias: pro residues; that stretch reads MAQPGLPPVPGAPGMPPGIP. Composition is skewed to low complexity over residues 283–292 and 326–372; these read SSSTASSNSE and TPAA…ATLT. Positions 376–408 are GLEBS; it reads ATSKLIHPDEDISLEERRAQLPKYQRNLPRPGQ. The interval 462–495 is disordered; the sequence is PYGQGPPMVPPYQGGPPRPPMGMRPPVMSQGGRY. The segment covering 464–484 has biased composition (pro residues); the sequence is GQGPPMVPPYQGGPPRPPMGM.

Interacts (via GLEBS region) with BUB3. In terms of tissue distribution, in day-13 embryo, strongly expressed in the nervous system (brain, spinal cord and dorsal root ganglia), with strong to weak expression in other regions. Continues to be strongly expressed in the neonatal brain while expression is weak in the brain and spinal cord of adult.

The protein localises to the nucleus. The protein resides in the chromosome. It is found in the centromere. Its subcellular location is the kinetochore. It localises to the cytoplasm. The protein localises to the cytoskeleton. The protein resides in the spindle. Kinetochore- and microtubule-binding protein that plays a key role in spindle assembly. ZNF207/BuGZ is mainly composed of disordered low-complexity regions and undergoes phase transition or coacervation to form temperature-dependent liquid droplets. Coacervation promotes microtubule bundling and concentrates tubulin, promoting microtubule polymerization and assembly of spindle and spindle matrix by concentrating its building blocks. Also acts as a regulator of mitotic chromosome alignment by mediating the stability and kinetochore loading of BUB3. Mechanisms by which BUB3 is protected are unclear: according to a first report, ZNF207/BuGZ may act by blocking ubiquitination and proteasomal degradation of BUB3. According to another report, the stabilization is independent of the proteasome. The protein is BUB3-interacting and GLEBS motif-containing protein ZNF207 of Mus musculus (Mouse).